A 151-amino-acid chain; its full sequence is Cell division protein SepF (151 aa).

This sequence belongs to the SepF family. Homodimer. Interacts with FtsZ.

It localises to the cytoplasm. Cell division protein that is part of the divisome complex and is recruited early to the Z-ring. Probably stimulates Z-ring formation, perhaps through the cross-linking of FtsZ protofilaments. Its function overlaps with FtsA. The sequence is that of Cell division protein SepF from Desulfitobacterium hafniense (strain Y51).